Reading from the N-terminus, the 399-residue chain is Leu/Ile/Val-binding protein homolog 7 (399 aa).

The N-terminal stretch at M1–A22 is a signal peptide.

Belongs to the leucine-binding protein family.

Its function is as follows. Component of an amino-acid transport system. In Brucella abortus (strain 2308), this protein is Leu/Ile/Val-binding protein homolog 7.